A 207-amino-acid chain; its full sequence is Mediator of RNA polymerase II transcription subunit 21 (207 aa).

The segment at 36-120 is disordered; it reads IPPPDVPDAA…APDSPRTFAS (85 aa). A compositionally biased stretch (low complexity) spans 91 to 108; the sequence is GEGAQTPGPAAGAGADPN. Residues 146–194 are a coiled coil; sequence IDSSEAEQEKRIRELEGELRQVEEERELKMRELKRLRRTLENVLTAVET.

It belongs to the Mediator complex subunit 21 family. As to quaternary structure, component of the Mediator complex.

Its subcellular location is the nucleus. Functionally, component of the Mediator complex, a coactivator involved in the regulated transcription of nearly all RNA polymerase II-dependent genes. Mediator functions as a bridge to convey information from gene-specific regulatory proteins to the basal RNA polymerase II transcription machinery. Mediator is recruited to promoters by direct interactions with regulatory proteins and serves as a scaffold for the assembly of a functional preinitiation complex with RNA polymerase II and the general transcription factors. The polypeptide is Mediator of RNA polymerase II transcription subunit 21 (srb7) (Aspergillus fumigatus (strain ATCC MYA-4609 / CBS 101355 / FGSC A1100 / Af293) (Neosartorya fumigata)).